The primary structure comprises 223 residues: Putative 3-methyladenine DNA glycosylase (223 aa).

This sequence belongs to the DNA glycosylase MPG family.

This Pseudomonas savastanoi pv. phaseolicola (strain 1448A / Race 6) (Pseudomonas syringae pv. phaseolicola (strain 1448A / Race 6)) protein is Putative 3-methyladenine DNA glycosylase.